Here is a 932-residue protein sequence, read N- to C-terminus: DNA mismatch repair protein MutS (932 aa).

Residue 615 to 622 (GPNMAGKS) coordinates ATP.

Belongs to the DNA mismatch repair MutS family.

Its function is as follows. This protein is involved in the repair of mismatches in DNA. It is possible that it carries out the mismatch recognition step. This protein has a weak ATPase activity. This chain is DNA mismatch repair protein MutS, found in Clostridium botulinum (strain Okra / Type B1).